A 342-amino-acid chain; its full sequence is scyllo-inositol 2-dehydrogenase (NAD(+)) (342 aa).

It belongs to the Gfo/Idh/MocA family.

The enzyme catalyses scyllo-inositol + NAD(+) = scyllo-inosose + NADH + H(+). The protein operates within polyol metabolism. Its function is as follows. Catalyzes the reversible NAD(+)-dependent oxidation of scyllo-inositol (SI) to 2,4,6/3,5-pentahydroxycyclohexanone (scyllo-inosose or SIS). Is required for SI catabolism that allows B.subtilis to utilize SI as the sole carbon source for growth. Cannot use NADP(+) instead of NAD(+). This Bacillus subtilis (strain 168) protein is scyllo-inositol 2-dehydrogenase (NAD(+)).